Consider the following 614-residue polypeptide: Threonine--tRNA ligase (614 aa).

An editing domain region spans residues 1–141 (MRLLLIHSDY…LSKTIVPGEE (141 aa)). A catalytic region spans residues 198 to 490 (AHVDLMRSKE…ISTQKVPALP (293 aa)). Zn(2+) contacts are provided by cysteine 290, histidine 342, and histidine 463.

This sequence belongs to the class-II aminoacyl-tRNA synthetase family. In terms of assembly, homodimer. Zn(2+) serves as cofactor.

It is found in the cytoplasm. The enzyme catalyses tRNA(Thr) + L-threonine + ATP = L-threonyl-tRNA(Thr) + AMP + diphosphate + H(+). Catalyzes the attachment of threonine to tRNA(Thr) in a two-step reaction: L-threonine is first activated by ATP to form Thr-AMP and then transferred to the acceptor end of tRNA(Thr). Also edits incorrectly charged L-seryl-tRNA(Thr). The chain is Threonine--tRNA ligase from Methanoregula boonei (strain DSM 21154 / JCM 14090 / 6A8).